A 305-amino-acid chain; its full sequence is Olfactory receptor 4X1 (305 aa).

At 1-23 the chain is on the extracellular side; the sequence is MVATNNVTEIIFVGFSQNWSEQR. Residues Asn-6 and Asn-18 are each glycosylated (N-linked (GlcNAc...) asparagine). A helical membrane pass occupies residues 24–47; sequence VISVMFLLMYTAVVLGNGLIVVTI. Over 48-55 the chain is Cytoplasmic; it reads LASKVLTS. A helical transmembrane segment spans residues 56–77; that stretch reads PMYFFLSYLSFVEICYCSVMAP. The Extracellular segment spans residues 78–98; the sequence is KLIFDSFIKRKVISLKGCLTQ. A disulfide bridge links Cys-95 with Cys-187. Residues 99 to 118 form a helical membrane-spanning segment; the sequence is MFSLHFFGGTEAFLLMVMAY. The Cytoplasmic segment spans residues 119–137; the sequence is DRYVAICKPLHYMAIMNQR. The chain crosses the membrane as a helical span at residues 138-156; it reads MCGLLVRIAWGGGLLHSVG. The Extracellular portion of the chain corresponds to 157–193; that stretch reads QTFLIFQLPFCGPNIMDHYFCDVHPVLELACADTFFI. Residues 194 to 217 traverse the membrane as a helical segment; it reads SLLIITNGGSISVVSFFVLMASYL. Over 218 to 233 the chain is Cytoplasmic; the sequence is IILHFLRSHNLEGQHK. Residues 234–256 traverse the membrane as a helical segment; the sequence is ALSTCASHVTVVDLFFIPCSLVY. The Extracellular segment spans residues 257 to 267; the sequence is IRPCVTLPADK. The helical transmembrane segment at 268–287 threads the bilayer; sequence IVAVFYTVVTPLLNPVIYSF. Residues 288–305 lie on the Cytoplasmic side of the membrane; the sequence is RNAEVKNAMRRFIGGKVI.

It belongs to the G-protein coupled receptor 1 family.

The protein localises to the cell membrane. Its function is as follows. Odorant receptor. This is Olfactory receptor 4X1 (OR4X1) from Homo sapiens (Human).